The primary structure comprises 312 residues: Ribosomal protein L11 methyltransferase (312 aa).

Residues Thr-160, Gly-181, Asp-203, and Asn-248 each contribute to the S-adenosyl-L-methionine site.

It belongs to the methyltransferase superfamily. PrmA family.

The protein localises to the cytoplasm. The catalysed reaction is L-lysyl-[protein] + 3 S-adenosyl-L-methionine = N(6),N(6),N(6)-trimethyl-L-lysyl-[protein] + 3 S-adenosyl-L-homocysteine + 3 H(+). Functionally, methylates ribosomal protein L11. The sequence is that of Ribosomal protein L11 methyltransferase from Fusobacterium nucleatum subsp. nucleatum (strain ATCC 25586 / DSM 15643 / BCRC 10681 / CIP 101130 / JCM 8532 / KCTC 2640 / LMG 13131 / VPI 4355).